Reading from the N-terminus, the 243-residue chain is UPF0246 protein SEQ_2141 (243 aa).

This sequence belongs to the UPF0246 family.

The sequence is that of UPF0246 protein SEQ_2141 from Streptococcus equi subsp. equi (strain 4047).